A 247-amino-acid chain; its full sequence is Carboxy-S-adenosyl-L-methionine synthase (247 aa).

Residues Y39, 64–66 (GCS), 89–90 (DN), 117–118 (DI), N132, and R199 each bind S-adenosyl-L-methionine.

Belongs to the class I-like SAM-binding methyltransferase superfamily. Cx-SAM synthase family. As to quaternary structure, homodimer.

The enzyme catalyses prephenate + S-adenosyl-L-methionine = carboxy-S-adenosyl-L-methionine + 3-phenylpyruvate + H2O. In terms of biological role, catalyzes the conversion of S-adenosyl-L-methionine (SAM) to carboxy-S-adenosyl-L-methionine (Cx-SAM). The polypeptide is Carboxy-S-adenosyl-L-methionine synthase (Escherichia coli (strain K12 / MC4100 / BW2952)).